A 233-amino-acid chain; its full sequence is Esterase FUS5 (233 aa).

Active-site charge relay system residues include Ser105, Asp159, and His187.

This sequence belongs to the LovG family.

Esterase; part of the gene cluster that mediates the biosynthesis of the mycotoxin fusarin C. Within the cluster, FUS1, FUS2, FUS8 and FUS9 are sufficient for fusarin production. The other FUS cluster members are not essential for fusarin C biosynthesis. The polypeptide is Esterase FUS5 (Gibberella fujikuroi (strain CBS 195.34 / IMI 58289 / NRRL A-6831) (Bakanae and foot rot disease fungus)).